Here is a 147-residue protein sequence, read N- to C-terminus: Hemoglobin subunit beta (147 aa).

The Globin domain maps to 2–147 (DWTDAERAAI…VVSALGRQYH (146 aa)). Positions 63 and 92 each coordinate heme b.

This sequence belongs to the globin family. As to quaternary structure, heterotetramer of two alpha chains and two beta chains. In terms of tissue distribution, red blood cells.

In terms of biological role, involved in oxygen transport from gills to the various peripheral tissues. This chain is Hemoglobin subunit beta (hbb), found in Leiostomus xanthurus (Spot).